Reading from the N-terminus, the 282-residue chain is Parvulin-like PPIase (282 aa).

Residues 1 to 20 (MKKLSVIFLSVSMLSGIAFA) form the signal peptide. One can recognise a PpiC domain in the interval 138–231 (KEQIKVAHIL…FGWHIIKVLE (94 aa)).

Belongs to the PpiC/parvulin rotamase family.

The protein resides in the cell outer membrane. The enzyme catalyses [protein]-peptidylproline (omega=180) = [protein]-peptidylproline (omega=0). The sequence is that of Parvulin-like PPIase (plp) from Rickettsia conorii (strain ATCC VR-613 / Malish 7).